A 244-amino-acid polypeptide reads, in one-letter code: Aliphatic sulfonates import ATP-binding protein SsuB 2 (244 aa).

Residues 13 to 229 (VQVRSLVRGF…ALGDSKFHEF (217 aa)) form the ABC transporter domain. 45 to 52 (GKSGSGKS) serves as a coordination point for ATP.

The protein belongs to the ABC transporter superfamily. Aliphatic sulfonates importer (TC 3.A.1.17.2) family. In terms of assembly, the complex is composed of two ATP-binding proteins (SsuB), two transmembrane proteins (SsuC) and a solute-binding protein (SsuA).

The protein localises to the cell membrane. It carries out the reaction ATP + H2O + aliphatic sulfonate-[sulfonate-binding protein]Side 1 = ADP + phosphate + aliphatic sulfonateSide 2 + [sulfonate-binding protein]Side 1.. In terms of biological role, part of the ABC transporter complex SsuABC involved in aliphatic sulfonates import. Responsible for energy coupling to the transport system. This chain is Aliphatic sulfonates import ATP-binding protein SsuB 2, found in Rhodococcus jostii (strain RHA1).